We begin with the raw amino-acid sequence, 3092 residues long: Inhibitory regulator protein IRA1 (3092 aa).

2 disordered regions span residues 375–430 (HLHH…MASL) and 450–487 (LGQA…NSAN). Residues 379 to 400 (SSSSSKTTNTNSPNSISKTSIK) show a composition bias toward low complexity. Residues 401-430 (QSSVNASGNVSPSQFSTGNDASPTSPMASL) show a composition bias toward polar residues. The segment covering 455–487 (TSTSTTAATTKTDADTPSTMNTNNNNNNNNSAN) has biased composition (low complexity). Residues S497 and S915 each carry the phosphoserine modification. Disordered stretches follow at residues 946-988 (SGVP…VLSS) and 1003-1023 (TILK…ADDK). The segment covering 965 to 988 (QSPYSSPPQLQQSDLPSPLSVLSS) has biased composition (low complexity). S1342 carries the phosphoserine modification. The Ras-GAP domain maps to 1725 to 1930 (NASHILVTEL…DKIFNFLSEL (206 aa)). 2 positions are modified to phosphoserine; by PKA: S1753 and S3004.

The protein resides in the cytoplasm. In terms of biological role, inhibitory regulator of the Ras-cyclic AMP pathway in S.cerevisiae. Stimulates the GTPase activity of Ras proteins. The protein is Inhibitory regulator protein IRA1 (IRA1) of Saccharomyces cerevisiae (strain ATCC 204508 / S288c) (Baker's yeast).